Reading from the N-terminus, the 46-residue chain is Cuticle protein 4.9 (46 aa).

Its function is as follows. Component of the cuticle of migratory locust which contains more than 100 different structural proteins. The polypeptide is Cuticle protein 4.9 (Locusta migratoria (Migratory locust)).